Here is a 209-residue protein sequence, read N- to C-terminus: Small ribosomal subunit protein uS4 (209 aa).

Positions 23–46 are disordered; the sequence is SRNPLLKKPHPPGQHGMQRKKKSD. The S4 RNA-binding domain occupies 93–153; that stretch reads CRLDNMVYRM…EKSKRLQSVK (61 aa).

This sequence belongs to the universal ribosomal protein uS4 family. As to quaternary structure, part of the 30S ribosomal subunit. Contacts protein S5. The interaction surface between S4 and S5 is involved in control of translational fidelity.

Its function is as follows. One of the primary rRNA binding proteins, it binds directly to 16S rRNA where it nucleates assembly of the body of the 30S subunit. In terms of biological role, with S5 and S12 plays an important role in translational accuracy. In Chlamydia pneumoniae (Chlamydophila pneumoniae), this protein is Small ribosomal subunit protein uS4.